We begin with the raw amino-acid sequence, 126 residues long: Aspartate 1-decarboxylase (126 aa).

Ser25 (schiff-base intermediate with substrate; via pyruvic acid) is an active-site residue. Ser25 is subject to Pyruvic acid (Ser). Position 57 (Thr57) interacts with substrate. Tyr58 functions as the Proton donor in the catalytic mechanism. 73–75 (GAA) is a binding site for substrate.

Belongs to the PanD family. Heterooctamer of four alpha and four beta subunits. Pyruvate is required as a cofactor. Post-translationally, is synthesized initially as an inactive proenzyme, which is activated by self-cleavage at a specific serine bond to produce a beta-subunit with a hydroxyl group at its C-terminus and an alpha-subunit with a pyruvoyl group at its N-terminus.

It localises to the cytoplasm. The enzyme catalyses L-aspartate + H(+) = beta-alanine + CO2. It participates in cofactor biosynthesis; (R)-pantothenate biosynthesis; beta-alanine from L-aspartate: step 1/1. In terms of biological role, catalyzes the pyruvoyl-dependent decarboxylation of aspartate to produce beta-alanine. The protein is Aspartate 1-decarboxylase of Chromohalobacter salexigens (strain ATCC BAA-138 / DSM 3043 / CIP 106854 / NCIMB 13768 / 1H11).